A 330-amino-acid chain; its full sequence is Anthranilate phosphoribosyltransferase (330 aa).

Residues Gly-79, 82-83, Thr-87, 89-92, 107-115, and Ser-119 each bind 5-phospho-alpha-D-ribose 1-diphosphate; these read GD, NIST, and KHGNYGVSS. Anthranilate is bound at residue Gly-79. A Mg(2+)-binding site is contributed by Ser-91. Asn-110 contributes to the anthranilate binding site. Arg-165 provides a ligand contact to anthranilate. Mg(2+) contacts are provided by Asp-223 and Glu-224.

It belongs to the anthranilate phosphoribosyltransferase family. In terms of assembly, homodimer. It depends on Mg(2+) as a cofactor.

The enzyme catalyses N-(5-phospho-beta-D-ribosyl)anthranilate + diphosphate = 5-phospho-alpha-D-ribose 1-diphosphate + anthranilate. Its pathway is amino-acid biosynthesis; L-tryptophan biosynthesis; L-tryptophan from chorismate: step 2/5. Catalyzes the transfer of the phosphoribosyl group of 5-phosphorylribose-1-pyrophosphate (PRPP) to anthranilate to yield N-(5'-phosphoribosyl)-anthranilate (PRA). The sequence is that of Anthranilate phosphoribosyltransferase from Flavobacterium psychrophilum (strain ATCC 49511 / DSM 21280 / CIP 103535 / JIP02/86).